The primary structure comprises 132 residues: Small ribosomal subunit protein uS8 (132 aa).

Belongs to the universal ribosomal protein uS8 family. In terms of assembly, part of the 30S ribosomal subunit. Contacts proteins S5 and S12.

Functionally, one of the primary rRNA binding proteins, it binds directly to 16S rRNA central domain where it helps coordinate assembly of the platform of the 30S subunit. The polypeptide is Small ribosomal subunit protein uS8 (Limosilactobacillus reuteri (strain DSM 20016) (Lactobacillus reuteri)).